The following is a 490-amino-acid chain: Protein dead ringer homolog (490 aa).

Over residues 1-33 the composition is skewed to basic and acidic residues; that stretch reads MVEDQRRQLMEEEDEERRLILEEQRRRMMRADR. Disordered stretches follow at residues 1 to 77 and 106 to 135; these read MVED…AHID and ITQSPPLTNGSNHDNDHDPYLSHRAAHGGS. The span at 34–50 shows a compositional bias: acidic residues; sequence DEEEEEEEEEEEEEREE. The segment covering 51-76 has biased composition (basic and acidic residues); it reads DDGRRSEDEMREDEPPGRRETSHAHI. A compositionally biased stretch (polar residues) spans 106–117; sequence ITQSPPLTNGSN. An ARID domain is found at 202 to 294; the sequence is DSKRKEFLDD…YLYPYECEKK (93 aa). Residues 298 to 369 are disordered; that stretch reads SPSELQSAID…PPRLSPSTSP (72 aa). Residues 316–325 are compositionally biased toward basic residues; that stretch reads PSYHSPHMHP. In terms of domain architecture, REKLES spans 389–479; the sequence is AAMLAELAER…GVLYPRGGTR (91 aa).

The protein localises to the nucleus. Its function is as follows. Transcription factor involved in skeletogenesis and oral ectoderm patterning. The polypeptide is Protein dead ringer homolog (dri) (Strongylocentrotus purpuratus (Purple sea urchin)).